The following is a 322-amino-acid chain: tRNA dimethylallyltransferase (322 aa).

An ATP-binding site is contributed by 21 to 28 (GQTAVGKT). 23–28 (TAVGKT) is a binding site for substrate. Residues 46-49 (DSGC) are interaction with substrate tRNA.

The protein belongs to the IPP transferase family. Monomer. Mg(2+) serves as cofactor.

The enzyme catalyses adenosine(37) in tRNA + dimethylallyl diphosphate = N(6)-dimethylallyladenosine(37) in tRNA + diphosphate. Catalyzes the transfer of a dimethylallyl group onto the adenine at position 37 in tRNAs that read codons beginning with uridine, leading to the formation of N6-(dimethylallyl)adenosine (i(6)A). This is tRNA dimethylallyltransferase from Wigglesworthia glossinidia brevipalpis.